Reading from the N-terminus, the 145-residue chain is Bacilliredoxin GK1781 (145 aa).

Belongs to the bacilliredoxin family.

This Geobacillus kaustophilus (strain HTA426) protein is Bacilliredoxin GK1781.